We begin with the raw amino-acid sequence, 405 residues long: Putative polysaccharide ligase RP358 (405 aa).

The next 10 membrane-spanning stretches (helical) occupy residues 23–43 (IAATVAFFLLSIIITGFISFI), 77–97 (LFTAWCFISCLFAVHPINSLV), 120–140 (VLYIKNSLILGIITAILLFFI), 156–178 (FGLYMLDRGCALLSITTWVAIII), 201–221 (ISDSLASFLGFSIGGIIFILA), 227–247 (IFFKLITISLITGSLLFPVIA), 270–290 (LFIWHFVANKIIIRPILGYGF), 322–342 (ILQITLELGILGLALFLCLVY), 353–375 (VSNFRAASYSCFINYYIIGMISY), and 377–397 (IWQTWWILSGIWILVLMKLLV).

Belongs to the O-antigen ligase family.

Its subcellular location is the membrane. In Rickettsia prowazekii (strain Madrid E), this protein is Putative polysaccharide ligase RP358.